The following is a 46-amino-acid chain: uncharacterized protein (46 aa).

This is an uncharacterized protein from Escherichia coli.